The primary structure comprises 205 residues: Large ribosomal subunit protein bL9 (205 aa).

A disordered region spans residues 160–205; that stretch reads RDRKSRNAAAASEVQDAPVEDGGDEVVSVDSVAAEDGGADASGGTA. Residues 184–195 show a composition bias toward low complexity; it reads EVVSVDSVAAED.

It belongs to the bacterial ribosomal protein bL9 family.

Binds to the 23S rRNA. In Anaplasma phagocytophilum (strain HZ), this protein is Large ribosomal subunit protein bL9.